Consider the following 441-residue polypeptide: Protein eva-1 homolog C (441 aa).

Residues 1–23 (MLLPGPARQPPTPQPVQHPGLRR) form a disordered region. The first 48 residues, 1-48 (MLLPGPARQPPTPQPVQHPGLRRQVEPPGQLLRLFYCTVLVCSKEISA), serve as a signal peptide directing secretion. The span at 7–16 (ARQPPTPQPV) shows a compositional bias: pro residues. The Extracellular segment spans residues 49 to 322 (LTDFSGYLTK…AYIRAHPERA (274 aa)). N-linked (GlcNAc...) asparagine glycosylation is present at asparagine 62. One can recognise an SUEL-type lectin 1 domain in the interval 67–159 (ACDGDYLNLQ…KYLLVSFKCQ (93 aa)). Residue asparagine 165 is glycosylated (N-linked (GlcNAc...) asparagine). The region spanning 168 to 260 (VCEDQELKLH…KYLTVTYACV (93 aa)) is the SUEL-type lectin 2 domain. The helical transmembrane segment at 323 to 343 (ALLFVSSVCIGLALTLCALVI) threads the bilayer. The Cytoplasmic segment spans residues 344–441 (RESCAKDFRD…SLPRNMGQFY (98 aa)). Residues 362–391 (VPGSDKVEEDSEDEEEEEDSSESDFPGELS) form a disordered region. The segment covering 368–383 (VEEDSEDEEEEEDSSE) has biased composition (acidic residues).

This sequence belongs to the EVA1 family.

The protein resides in the cell membrane. Its function is as follows. Binds heparin. This chain is Protein eva-1 homolog C (EVA1C), found in Pan troglodytes (Chimpanzee).